The following is a 372-amino-acid chain: 4-hydroxy-3-methylbut-2-en-1-yl diphosphate synthase (flavodoxin) (372 aa).

[4Fe-4S] cluster-binding residues include Cys270, Cys273, Cys305, and Glu312.

It belongs to the IspG family. The cofactor is [4Fe-4S] cluster.

The enzyme catalyses (2E)-4-hydroxy-3-methylbut-2-enyl diphosphate + oxidized [flavodoxin] + H2O + 2 H(+) = 2-C-methyl-D-erythritol 2,4-cyclic diphosphate + reduced [flavodoxin]. Its pathway is isoprenoid biosynthesis; isopentenyl diphosphate biosynthesis via DXP pathway; isopentenyl diphosphate from 1-deoxy-D-xylulose 5-phosphate: step 5/6. Converts 2C-methyl-D-erythritol 2,4-cyclodiphosphate (ME-2,4cPP) into 1-hydroxy-2-methyl-2-(E)-butenyl 4-diphosphate. The chain is 4-hydroxy-3-methylbut-2-en-1-yl diphosphate synthase (flavodoxin) from Idiomarina loihiensis (strain ATCC BAA-735 / DSM 15497 / L2-TR).